Here is a 418-residue protein sequence, read N- to C-terminus: MATLIPSFKKDNPFESINDNELIGLTFNDQDGPSNNILWSSSKIVNLIPQGQFQAKQPDAVSGNFAKFGDENNSGQTIDSGILLDDNADPSSNVIWSSEKIAKIPLPPFQLKQLDAVSGNISIFGSDVNLGQVIDSGYSINDSLPPSSQVIWSSNQVQSQLLAVSQAKQPNANAGNLAIFGNGVNNGQAIDSGYSINDLSAPSSNVLYSSGKIYQILPQPQVSFLSGVSPTSTVNPSSNILYVGVDGSSYVWNGSVYNNVFVKSYSKFSSQSPLSVPPGSNISIPFPIVDSSGQSSKGSISISPSGVVTITSLSQASSLYKAKFSGQGLNSGGASIQVSFNFVDQSNQQLGNSSSAFSVSVGGLAINSQCSLEQYFQVPPLGQLSFSVNIVTKLSDPPVILGNVGPIDNPYLIVEQIY.

This is an uncharacterized protein from Invertebrate iridescent virus 6 (IIV-6).